Here is a 216-residue protein sequence, read N- to C-terminus: GTP cyclohydrolase 1 (216 aa).

Residues C108, H111, and C179 each coordinate Zn(2+).

It belongs to the GTP cyclohydrolase I family. Toroid-shaped homodecamer, composed of two pentamers of five dimers.

It carries out the reaction GTP + H2O = 7,8-dihydroneopterin 3'-triphosphate + formate + H(+). The protein operates within cofactor biosynthesis; 7,8-dihydroneopterin triphosphate biosynthesis; 7,8-dihydroneopterin triphosphate from GTP: step 1/1. The polypeptide is GTP cyclohydrolase 1 (Shewanella amazonensis (strain ATCC BAA-1098 / SB2B)).